A 338-amino-acid polypeptide reads, in one-letter code: Probable 1-aminocyclopropane-1-carboxylate deaminase (338 aa).

K51 is modified (N6-(pyridoxal phosphate)lysine). S78 (nucleophile) is an active-site residue.

Belongs to the ACC deaminase/D-cysteine desulfhydrase family. Pyridoxal 5'-phosphate serves as cofactor.

The enzyme catalyses 1-aminocyclopropane-1-carboxylate + H2O = 2-oxobutanoate + NH4(+). Its function is as follows. Catalyzes a cyclopropane ring-opening reaction, the irreversible conversion of 1-aminocyclopropane-1-carboxylate (ACC) to ammonia and alpha-ketobutyrate. This chain is Probable 1-aminocyclopropane-1-carboxylate deaminase, found in Schizosaccharomyces pombe (strain 972 / ATCC 24843) (Fission yeast).